Consider the following 449-residue polypeptide: Phosphoglucosamine mutase (449 aa).

The active-site Phosphoserine intermediate is the S101. Residues S101, D243, D245, and D247 each coordinate Mg(2+). Phosphoserine is present on S101.

It belongs to the phosphohexose mutase family. Mg(2+) serves as cofactor. In terms of processing, activated by phosphorylation.

It catalyses the reaction alpha-D-glucosamine 1-phosphate = D-glucosamine 6-phosphate. Functionally, catalyzes the conversion of glucosamine-6-phosphate to glucosamine-1-phosphate. The protein is Phosphoglucosamine mutase of Syntrophus aciditrophicus (strain SB).